The chain runs to 1513 residues: DNA-directed RNA polymerase subunit beta'' (1513 aa).

Residues Cys220, Cys296, Cys303, and Cys306 each coordinate Zn(2+). The disordered stretch occupies residues 644–769 (RTREKDSENE…EYGNPEEDSV (126 aa)). Residues 659–679 (NEYRTREEECKTLEDEYRTRE) are compositionally biased toward basic and acidic residues. The segment covering 680 to 707 (EEYETLEDEYGIPENEYETLEDEYGILE) has biased composition (acidic residues). Basic and acidic residues predominate over residues 726–737 (NKYRPREDKYGT). Over residues 738–767 (LEEDSEDEHGTLEEDSEEDSEDEYGNPEED) the composition is skewed to acidic residues.

This sequence belongs to the RNA polymerase beta' chain family. RpoC2 subfamily. In terms of assembly, in plastids the minimal PEP RNA polymerase catalytic core is composed of four subunits: alpha, beta, beta', and beta''. When a (nuclear-encoded) sigma factor is associated with the core the holoenzyme is formed, which can initiate transcription. It depends on Zn(2+) as a cofactor.

It localises to the plastid. Its subcellular location is the chloroplast. It carries out the reaction RNA(n) + a ribonucleoside 5'-triphosphate = RNA(n+1) + diphosphate. In terms of biological role, DNA-dependent RNA polymerase catalyzes the transcription of DNA into RNA using the four ribonucleoside triphosphates as substrates. The sequence is that of DNA-directed RNA polymerase subunit beta'' from Oryza nivara (Indian wild rice).